Consider the following 421-residue polypeptide: Outer capsid protein P8 (421 aa).

It belongs to the phytoreovirus outer capsid protein P8 family. As to quaternary structure, homotrimer. Homomultimer. Interacts with host peroxisomal glycolate oxidase (GOX). This interaction mediates its relocation to virus factories peripheral to host peroxisomes.

Its subcellular location is the virion. The protein localises to the host cytoplasm. Capsid protein which self-assembles to form the outer icosahedral capsid with a T=13 symmetry, about 70 nm in diameter and consisting of 780 molecules capsid proteins. The protein is Outer capsid protein P8 (S8) of Rice dwarf virus (isolate S) (RDV).